Reading from the N-terminus, the 117-residue chain is Large ribosomal subunit protein uL18 (117 aa).

It belongs to the universal ribosomal protein uL18 family. Part of the 50S ribosomal subunit; part of the 5S rRNA/L5/L18/L25 subcomplex. Contacts the 5S and 23S rRNAs.

Its function is as follows. This is one of the proteins that bind and probably mediate the attachment of the 5S RNA into the large ribosomal subunit, where it forms part of the central protuberance. This chain is Large ribosomal subunit protein uL18, found in Pectobacterium carotovorum subsp. carotovorum (strain PC1).